The following is a 199-amino-acid chain: Photosystem I reaction center subunit XI (199 aa).

2 consecutive transmembrane segments (helical) span residues Leu108 to Leu128 and Phe165 to Leu185.

This sequence belongs to the PsaL family.

The protein resides in the cellular thylakoid membrane. The polypeptide is Photosystem I reaction center subunit XI (Prochlorococcus marinus (strain AS9601)).